The sequence spans 150 residues: Large ribosomal subunit protein bL9 (150 aa).

It belongs to the bacterial ribosomal protein bL9 family.

Binds to the 23S rRNA. The chain is Large ribosomal subunit protein bL9 from Neisseria meningitidis serogroup B (strain ATCC BAA-335 / MC58).